The following is a 371-amino-acid chain: MSEISLIMLAAGNSTRFNTKVKKQFLRLGNDPLWLYATKNLSSFYPFKKIVVTSSNITYMKKFTKNYEFIEGGDTRAESLKKALELIDSEFVMVSDVARVLVSKNLFDRLIENLDKADCITPALKVADTTLFDNEALQREKIKLIQTPQISKTKLLKKALDQNLEFTDDSTAIAAMGGKIWFVEGEENARKLTFKEDLKKLDLPTPSFEIFTGNGFDVHEFGENRPLLLAGVQIHPTMGLKAHSDGDVLAHSLTDAILGAAGLGDIGELYPDTDMKFKNANSMELLKQAYDKVREVGFELINIDICVMAQSPKLKDFKQAMQSNIAHTLDLDEFRINVKATTTEKLGFIGRKEGMAVLSSVNLKYFDWTRL.

The interval 1–210 is 2-C-methyl-D-erythritol 4-phosphate cytidylyltransferase; it reads MSEISLIMLA…LDLPTPSFEI (210 aa). The 2-C-methyl-D-erythritol 2,4-cyclodiphosphate synthase stretch occupies residues 211–371; the sequence is FTGNGFDVHE…NLKYFDWTRL (161 aa). Positions 217 and 219 each coordinate a divalent metal cation. Residues 217–219 and 243–244 contribute to the 4-CDP-2-C-methyl-D-erythritol 2-phosphate site; these read DVH and HS. His251 contributes to the a divalent metal cation binding site. 4-CDP-2-C-methyl-D-erythritol 2-phosphate is bound by residues 265–267, 270–274, 341–344, Phe348, and Arg351; these read DIG, YPDTD, and TTTE.

The protein in the N-terminal section; belongs to the IspD/TarI cytidylyltransferase family. IspD subfamily. This sequence in the C-terminal section; belongs to the IspF family. A divalent metal cation is required as a cofactor.

The enzyme catalyses 2-C-methyl-D-erythritol 4-phosphate + CTP + H(+) = 4-CDP-2-C-methyl-D-erythritol + diphosphate. The catalysed reaction is 4-CDP-2-C-methyl-D-erythritol 2-phosphate = 2-C-methyl-D-erythritol 2,4-cyclic diphosphate + CMP. It functions in the pathway isoprenoid biosynthesis; isopentenyl diphosphate biosynthesis via DXP pathway; isopentenyl diphosphate from 1-deoxy-D-xylulose 5-phosphate: step 2/6. It participates in isoprenoid biosynthesis; isopentenyl diphosphate biosynthesis via DXP pathway; isopentenyl diphosphate from 1-deoxy-D-xylulose 5-phosphate: step 4/6. Functionally, bifunctional enzyme that catalyzes the formation of 4-diphosphocytidyl-2-C-methyl-D-erythritol from CTP and 2-C-methyl-D-erythritol 4-phosphate (MEP) (IspD), and catalyzes the conversion of 4-diphosphocytidyl-2-C-methyl-D-erythritol 2-phosphate (CDP-ME2P) to 2-C-methyl-D-erythritol 2,4-cyclodiphosphate (ME-CPP) with a corresponding release of cytidine 5-monophosphate (CMP) (IspF). The protein is Bifunctional enzyme IspD/IspF of Campylobacter jejuni subsp. jejuni serotype O:6 (strain 81116 / NCTC 11828).